The chain runs to 241 residues: Trypsin-1 (241 aa).

Residues 1 to 13 (MKSLIFVLLLGAV) form the signal peptide. A propeptide spans 14–19 (FAEEDK) (activation peptide). Residues 20-239 (IVGGYECTKH…LSGWVRDTMA (220 aa)) form the Peptidase S1 domain. Intrachain disulfides connect Cys-26-Cys-155, Cys-44-Cys-60, Cys-128-Cys-228, Cys-135-Cys-201, Cys-166-Cys-180, and Cys-191-Cys-215. Catalysis depends on charge relay system residues His-59 and Asp-103. Ser-195 acts as the Charge relay system in catalysis.

It belongs to the peptidase S1 family.

The protein localises to the secreted. It is found in the extracellular space. The enzyme catalyses Preferential cleavage: Arg-|-Xaa, Lys-|-Xaa.. The protein is Trypsin-1 of Gadus morhua (Atlantic cod).